A 471-amino-acid chain; its full sequence is MKVTQEKLPASQIGLEIEITPEITQKTYEQVIKNLSRTVNIPGFRKGKVPRQVLLQRLGKTHIKAAALEELLQDGIEQAIKQESIAAIGQPRLRSSFDDLINSYEPGQPLTFTAAVDVEPEINLVQYTGLEAKAEEIKYDPARVDEVLEKERQELATLIPVEGRSAQIGDVAVVDFKGVIAKAEGDDENAEPEPIPGGDASDFQVELQEDRFIPGFVTGIVGMNPGDTKEVSAQFPDPYVNQELAGKPAIFTVTLKEIKEKELPELNDDFAQEVSDFDTLEALRASLAERYQKEAEDKTKNNQQEALLGELVKHIEVDLPETLIEKEVDAMLTQTAMRLSQQGLDVKKLFTQDIIPQLRERSRPEAVERLKRSLGLQEVAKRESITVTPEEIQARVTELVQQYPDEDIDAERLQTIVENELLSEKIIDWLLANSTVELVPEGSLASQEPEITAPETEAETIEVAAESTTGE.

Residues 169-264 form the PPIase FKBP-type domain; that stretch reads GDVAVVDFKG…LKEIKEKELP (96 aa).

This sequence belongs to the FKBP-type PPIase family. Tig subfamily.

The protein resides in the cytoplasm. The catalysed reaction is [protein]-peptidylproline (omega=180) = [protein]-peptidylproline (omega=0). Involved in protein export. Acts as a chaperone by maintaining the newly synthesized protein in an open conformation. Functions as a peptidyl-prolyl cis-trans isomerase. The chain is Trigger factor from Nostoc sp. (strain PCC 7120 / SAG 25.82 / UTEX 2576).